The following is a 432-amino-acid chain: Enolase (432 aa).

Gln-167 contacts (2R)-2-phosphoglycerate. Glu-209 (proton donor) is an active-site residue. 3 residues coordinate Mg(2+): Asp-246, Glu-290, and Asp-317. (2R)-2-phosphoglycerate-binding residues include Lys-342, Arg-371, Ser-372, and Lys-393. The active-site Proton acceptor is Lys-342.

The protein belongs to the enolase family. In terms of assembly, component of the RNA degradosome, a multiprotein complex involved in RNA processing and mRNA degradation. Mg(2+) serves as cofactor.

It is found in the cytoplasm. The protein localises to the secreted. The protein resides in the cell surface. The catalysed reaction is (2R)-2-phosphoglycerate = phosphoenolpyruvate + H2O. Its pathway is carbohydrate degradation; glycolysis; pyruvate from D-glyceraldehyde 3-phosphate: step 4/5. Functionally, catalyzes the reversible conversion of 2-phosphoglycerate (2-PG) into phosphoenolpyruvate (PEP). It is essential for the degradation of carbohydrates via glycolysis. The polypeptide is Enolase (Klebsiella pneumoniae subsp. pneumoniae (strain ATCC 700721 / MGH 78578)).